Here is a 111-residue protein sequence, read N- to C-terminus: Nucleoid-associated protein Ppha_1174 (111 aa).

The protein belongs to the YbaB/EbfC family. As to quaternary structure, homodimer.

Its subcellular location is the cytoplasm. The protein localises to the nucleoid. Functionally, binds to DNA and alters its conformation. May be involved in regulation of gene expression, nucleoid organization and DNA protection. In Pelodictyon phaeoclathratiforme (strain DSM 5477 / BU-1), this protein is Nucleoid-associated protein Ppha_1174.